The following is a 241-amino-acid chain: Zinc finger CCHC domain-containing protein 24 (241 aa).

Phosphoserine occurs at positions 65 and 93. The CCHC-type zinc finger occupies 132-149 (YLCHLCFNKGHYIKDCPQ).

This Homo sapiens (Human) protein is Zinc finger CCHC domain-containing protein 24 (ZCCHC24).